Here is a 122-residue protein sequence, read N- to C-terminus: Large ribosomal subunit protein bL12 (122 aa).

This sequence belongs to the bacterial ribosomal protein bL12 family. Homodimer. Part of the ribosomal stalk of the 50S ribosomal subunit. Forms a multimeric L10(L12)X complex, where L10 forms an elongated spine to which 2 to 4 L12 dimers bind in a sequential fashion. Binds GTP-bound translation factors.

Its function is as follows. Forms part of the ribosomal stalk which helps the ribosome interact with GTP-bound translation factors. Is thus essential for accurate translation. The polypeptide is Large ribosomal subunit protein bL12 (Sulfurimonas denitrificans (strain ATCC 33889 / DSM 1251) (Thiomicrospira denitrificans (strain ATCC 33889 / DSM 1251))).